The sequence spans 218 residues: MDSGKEGEAPAATSSPESRRTRSNGKVKAFADAAPPSATVVSTKATPLPRGGWKKGVAILDFIIRLGAIGSALGAAAIMGNSEQILPFFTQFFQFHAQWDDFPMFQFFVFANGAAGGFLILSLPFSIVCIVRPYTVGPRLLLVILDILMMALVMAAASSAAAVVYLAHNGSQDANWIAICQQFTDFCQVTSEAVVASFVAAFLLICLIVVSSVALKRG.

Positions 1-26 (MDSGKEGEAPAATSSPESRRTRSNGK) are disordered. Residues 1 to 58 (MDSGKEGEAPAATSSPESRRTRSNGKVKAFADAAPPSATVVSTKATPLPRGGWKKGVA) are Cytoplasmic-facing. Residues 59 to 79 (ILDFIIRLGAIGSALGAAAIM) traverse the membrane as a helical segment. Residues 80–106 (GNSEQILPFFTQFFQFHAQWDDFPMFQ) lie on the Extracellular side of the membrane. A helical membrane pass occupies residues 107–127 (FFVFANGAAGGFLILSLPFSI). Over 128–139 (VCIVRPYTVGPR) the chain is Cytoplasmic. Residues 140-160 (LLLVILDILMMALVMAAASSA) traverse the membrane as a helical segment. Over 161 to 192 (AAVVYLAHNGSQDANWIAICQQFTDFCQVTSE) the chain is Extracellular. N-linked (GlcNAc...) asparagine glycosylation occurs at Asn169. Residues 193–213 (AVVASFVAAFLLICLIVVSSV) traverse the membrane as a helical segment. The Cytoplasmic segment spans residues 214-218 (ALKRG).

It belongs to the Casparian strip membrane proteins (CASP) family. As to quaternary structure, homodimer and heterodimers.

It is found in the cell membrane. Functionally, regulates membrane-cell wall junctions and localized cell wall deposition. Required for establishment of the Casparian strip membrane domain (CSD) and the subsequent formation of Casparian strips, a cell wall modification of the root endodermis that determines an apoplastic barrier between the intraorganismal apoplasm and the extraorganismal apoplasm and prevents lateral diffusion. This is Casparian strip membrane protein 5 from Glycine max (Soybean).